Here is a 127-residue protein sequence, read N- to C-terminus: Fatty acid-binding protein, liver (127 aa).

Methionine 1 carries the post-translational modification N-acetylmethionine. Serine 11 carries the post-translational modification Phosphoserine. Residues lysine 31 and lysine 36 each carry the N6-succinyllysine modification. Serine 39 is modified (phosphoserine). Position 46 is an N6-succinyllysine (lysine 46). The residue at position 51 (threonine 51) is a Phosphothreonine. The residue at position 56 (serine 56) is a Phosphoserine. N6-succinyllysine is present on residues lysine 57, lysine 78, and lysine 90. At serine 100 the chain carries Phosphoserine. The residue at position 121 (lysine 121) is an N6-succinyllysine.

The protein belongs to the calycin superfamily. Fatty-acid binding protein (FABP) family. In terms of assembly, monomer.

It localises to the cytoplasm. Functionally, plays a role in lipoprotein-mediated cholesterol uptake in hepatocytes. Binds cholesterol. Binds free fatty acids and their coenzyme A derivatives, bilirubin, and some other small molecules in the cytoplasm. May be involved in intracellular lipid transport. The protein is Fatty acid-binding protein, liver (FABP1) of Sus scrofa (Pig).